Reading from the N-terminus, the 339-residue chain is 5-dehydro-2-deoxygluconokinase (339 aa).

Belongs to the carbohydrate kinase PfkB family.

It catalyses the reaction 5-dehydro-2-deoxy-D-gluconate + ATP = 6-phospho-5-dehydro-2-deoxy-D-gluconate + ADP + H(+). It participates in polyol metabolism; myo-inositol degradation into acetyl-CoA; acetyl-CoA from myo-inositol: step 5/7. Catalyzes the phosphorylation of 5-dehydro-2-deoxy-D-gluconate (2-deoxy-5-keto-D-gluconate or DKG) to 6-phospho-5-dehydro-2-deoxy-D-gluconate (DKGP). The sequence is that of 5-dehydro-2-deoxygluconokinase from Clostridium botulinum (strain Alaska E43 / Type E3).